The sequence spans 231 residues: Caspase-like protein (231 aa).

It belongs to the peptidase C14A family.

This is Caspase-like protein from Trichoplusia ni ascovirus 2c (TnAV-2c).